Consider the following 543-residue polypeptide: MTRYIFVTGGVVSSLGKGIASASLAAILEARGLKVTLLKLDPYINVDPGTMSPFQHGEVFVTHDGAETDLDLGHYERFVRTTMTRNNNFTTGRVYEDVLRRERRGDYLGATIQVIPHITDEIKRRIIKGAGNADVAMVEIGGTVGDIESQPFLEAIRQLRLEVGAKRAMLIHLTLVPYIATAGETKTKPTQHSVKELRSIGLQPDVLICRSDHPIDISSRRKIALFTNVEERAVIALEDVDTIYKIPSVLHAQGLDDIVVERFGLACGSADLSEWERVVDAKLHPEKEVTIAMVGKYMELLDAYKSLIEAMGHAGIQNRTRVNLRYIDSEDIENQGTALLEGADAILVPGGFGLRGVEGKIAAVRYARENKVPYLGICLGMQVAVIEYARDVLGWADANSTEFDKSCGHPVVGLITEWQDATGATEVRSESSDLGGTMRLGAQECQLEANSQVRQCYGKDEVVERHRHRYEVNNNLLPHLIEAGLKVTGRSGDGALVEVIEVADHPWFVACQFHPEFTSTPRDGHPLFSGFVNAALAQKARKA.

Residues 1–265 (MTRYIFVTGG…DDIVVERFGL (265 aa)) form an amidoligase domain region. Residue serine 13 participates in CTP binding. Serine 13 contributes to the UTP binding site. Residues 14-19 (SLGKGI) and aspartate 71 each bind ATP. Mg(2+)-binding residues include aspartate 71 and glutamate 139. CTP is bound by residues 146-148 (DIE), 186-191 (KTKPTQ), and lysine 222. UTP contacts are provided by residues 186 to 191 (KTKPTQ) and lysine 222. Residues 290-541 (TIAMVGKYME…VNAALAQKAR (252 aa)) enclose the Glutamine amidotransferase type-1 domain. Glycine 351 serves as a coordination point for L-glutamine. The Nucleophile; for glutamine hydrolysis role is filled by cysteine 378. L-glutamine is bound by residues 379 to 382 (LGMQ), glutamate 402, and arginine 469. Catalysis depends on residues histidine 514 and glutamate 516.

This sequence belongs to the CTP synthase family. Homotetramer.

The enzyme catalyses UTP + L-glutamine + ATP + H2O = CTP + L-glutamate + ADP + phosphate + 2 H(+). It catalyses the reaction L-glutamine + H2O = L-glutamate + NH4(+). It carries out the reaction UTP + NH4(+) + ATP = CTP + ADP + phosphate + 2 H(+). It functions in the pathway pyrimidine metabolism; CTP biosynthesis via de novo pathway; CTP from UDP: step 2/2. With respect to regulation, allosterically activated by GTP, when glutamine is the substrate; GTP has no effect on the reaction when ammonia is the substrate. The allosteric effector GTP functions by stabilizing the protein conformation that binds the tetrahedral intermediate(s) formed during glutamine hydrolysis. Inhibited by the product CTP, via allosteric rather than competitive inhibition. Its function is as follows. Catalyzes the ATP-dependent amination of UTP to CTP with either L-glutamine or ammonia as the source of nitrogen. Regulates intracellular CTP levels through interactions with the four ribonucleotide triphosphates. The polypeptide is CTP synthase (Azotobacter vinelandii (strain DJ / ATCC BAA-1303)).